The chain runs to 478 residues: Glutamate--tRNA ligase (478 aa).

A 'HIGH' region motif is present at residues 15–25 (PSPTGFLHIGG). The 'KMSKS' region signature appears at 244–248 (KLSKR). Lys-247 contacts ATP.

The protein belongs to the class-I aminoacyl-tRNA synthetase family. Glutamate--tRNA ligase type 1 subfamily. Monomer.

The protein resides in the cytoplasm. The catalysed reaction is tRNA(Glu) + L-glutamate + ATP = L-glutamyl-tRNA(Glu) + AMP + diphosphate. Catalyzes the attachment of glutamate to tRNA(Glu) in a two-step reaction: glutamate is first activated by ATP to form Glu-AMP and then transferred to the acceptor end of tRNA(Glu). The sequence is that of Glutamate--tRNA ligase from Bradyrhizobium sp. (strain ORS 278).